The sequence spans 198 residues: Na(+)-translocating NADH-quinone reductase subunit E (198 aa).

6 helical membrane-spanning segments follow: residues 11-31 (AVFIENMALAFFLGMCTFLAV), 35-55 (VTTAFGLGIAVTVVLGISVPA), 77-97 (FLNFITFIGVIAALVQILEMI), 109-129 (LGIFLPLITVNCAIFGGVSFM), 140-160 (IVYGFGSGIGWMLAIVLLASI), and 176-196 (LGITFVTTGLMALGFMSFSGV).

The protein belongs to the NqrDE/RnfAE family. In terms of assembly, composed of six subunits; NqrA, NqrB, NqrC, NqrD, NqrE and NqrF.

It localises to the cell inner membrane. The catalysed reaction is a ubiquinone + n Na(+)(in) + NADH + H(+) = a ubiquinol + n Na(+)(out) + NAD(+). In terms of biological role, NQR complex catalyzes the reduction of ubiquinone-1 to ubiquinol by two successive reactions, coupled with the transport of Na(+) ions from the cytoplasm to the periplasm. NqrA to NqrE are probably involved in the second step, the conversion of ubisemiquinone to ubiquinol. The chain is Na(+)-translocating NADH-quinone reductase subunit E from Photorhabdus laumondii subsp. laumondii (strain DSM 15139 / CIP 105565 / TT01) (Photorhabdus luminescens subsp. laumondii).